A 412-amino-acid polypeptide reads, in one-letter code: Burnettramic acids biosynthesis cluster protein E (412 aa).

Disordered regions lie at residues 1-66 (MAIA…KKIR), 308-342 (RNPT…SLAT), and 386-412 (SRAE…AAKG). A compositionally biased stretch (acidic residues) spans 36–58 (EDEQWALDELQDELCQEEPSDSE). A compositionally biased stretch (polar residues) spans 395–404 (EATTEPSVQS).

It functions in the pathway mycotoxin biosynthesis. Its function is as follows. Part of the gene cluster that mediates the biosynthesis of burnettramic acids, an unusual class of bolaamphiphilic pyrrolizidinediones that display potent antibacterial, antifungal, and cytotoxic activities. The first step of the biosynthesis of burnettramic acids is the hydroxylation of proline by the proline hydroxylase buaE to generate 4-hydroxyproline. The PKS-NRPS buaA and trans-enoyl reductase buaC construct the highly reduced polyketide chain, and the condensation (C) domain of buaA then catalyzes the amide bond formation with the activated 4-hydroxyproline. This is followed by the R domain releasing the nascent polyketide-peptide directly via a Dieckmann condensation to afford a tetramic acid fused to the hydroxyproline, generating the bicyclic pyrrolidinedione moiety. The cytochrome P450 monooxygenases buaD and buaG are likely responsible for the multiple hydroxylations on the polyketide chain and its terminus, although in the heterologous context, buaD does not appear to be required. Therefore, while buaG may be a multifunctional cytochrome P450 monooxygenase, it cannot be ruled out that the two secondary alcohols on the polyketide chain could have an acetate origin. Finally, the glycosyltransferase buaB transfers beta-D-mannose to the aglycone burnettramic acid A to form burnettramic acid A. Burnettramic acid B is a minor cis-pyrrolizidine epimer of burnettramic acid A and it is likely that small amounts of it form naturally in acidic environments. The role of the uncharacterized protein buaF in the biosynthesis of burnettramic acids has still to be determined. The sequence is that of Burnettramic acids biosynthesis cluster protein E from Petromyces alliaceus (Aspergillus alliaceus).